A 470-amino-acid chain; its full sequence is 6-phosphofructo-2-kinase/fructose-2,6-bisphosphatase (470 aa).

The tract at residues 1 to 249 (MADRLRELTQ…VYYLMNIHVT (249 aa)) is 6-phosphofructo-2-kinase. Phosphoserine; by PKA is present on Ser-31. 47–55 (GLPARGKTY) serves as a coordination point for ATP. Residues Arg-80 and Arg-104 each coordinate beta-D-fructose 6-phosphate. Residue Asp-130 is part of the active site. Beta-D-fructose 6-phosphate is bound by residues Thr-132 and Arg-138. The active site involves Cys-160. ATP is bound at residue 169–174 (NITQVK). The beta-D-fructose 6-phosphate site is built by Lys-174, Arg-195, and Tyr-199. Positions 250–470 (PRSIYLSRHG…EALDTVPEHF (221 aa)) are fructose-2,6-bisphosphatase. Arg-257 serves as a coordination point for beta-D-fructose 2,6-bisphosphate. The Tele-phosphohistidine intermediate role is filled by His-258. Positions 264 and 270 each coordinate beta-D-fructose 2,6-bisphosphate. Glu-327 functions as the Proton donor/acceptor in the catalytic mechanism. Beta-D-fructose 2,6-bisphosphate contacts are provided by Tyr-338, Arg-352, Lys-356, Tyr-367, Gln-393, and Arg-397. 349–352 (FALR) is an ATP binding site. Residues 393 to 397 (QAVMR) and Tyr-429 contribute to the ATP site.

It in the C-terminal section; belongs to the phosphoglycerate mutase family. In terms of assembly, homodimer.

The enzyme catalyses beta-D-fructose 2,6-bisphosphate + H2O = beta-D-fructose 6-phosphate + phosphate. The catalysed reaction is beta-D-fructose 6-phosphate + ATP = beta-D-fructose 2,6-bisphosphate + ADP + H(+). With respect to regulation, phosphorylation results in inhibition of the kinase activity. Functionally, synthesis and degradation of fructose 2,6-bisphosphate. The sequence is that of 6-phosphofructo-2-kinase/fructose-2,6-bisphosphatase from Aquarana catesbeiana (American bullfrog).